Reading from the N-terminus, the 176-residue chain is NADH:riboflavin 5'-phosphate oxidoreductase (176 aa).

Its function is as follows. Provides the reduced form of flavin mononucleotide for the PIIA synthase reaction. In Streptomyces pristinaespiralis, this protein is NADH:riboflavin 5'-phosphate oxidoreductase (snaC).